A 257-amino-acid chain; its full sequence is Transmembrane protein C257L (257 aa).

The next 2 helical transmembrane spans lie at 123 to 143 (LELL…FTAL) and 163 to 183 (MMIF…YVLV).

Belongs to the asfivirus C257R family.

It localises to the host membrane. It is found in the virion. The sequence is that of Transmembrane protein C257L from African swine fever virus (isolate Tick/South Africa/Pretoriuskop Pr4/1996) (ASFV).